A 558-amino-acid chain; its full sequence is Chaperonin GroEL 1 (558 aa).

ATP is bound by residues 29–32 (TLGP), 86–90 (DGTTT), glycine 413, and aspartate 494.

It belongs to the chaperonin (HSP60) family. As to quaternary structure, forms a cylinder of 14 subunits composed of two heptameric rings stacked back-to-back. Interacts with the co-chaperonin GroES.

It localises to the cytoplasm. It carries out the reaction ATP + H2O + a folded polypeptide = ADP + phosphate + an unfolded polypeptide.. Together with its co-chaperonin GroES, plays an essential role in assisting protein folding. The GroEL-GroES system forms a nano-cage that allows encapsulation of the non-native substrate proteins and provides a physical environment optimized to promote and accelerate protein folding. The protein is Chaperonin GroEL 1 of Acaryochloris marina (strain MBIC 11017).